A 405-amino-acid chain; its full sequence is Acetylornithine aminotransferase 2 (405 aa).

Pyridoxal 5'-phosphate contacts are provided by residues 105–106 and Phe-138; that span reads GT. Arg-141 provides a ligand contact to N(2)-acetyl-L-ornithine. Pyridoxal 5'-phosphate is bound at residue 224 to 227; the sequence is DEVQ. An N6-(pyridoxal phosphate)lysine modification is found at Lys-254. Ser-282 serves as a coordination point for N(2)-acetyl-L-ornithine. Thr-283 serves as a coordination point for pyridoxal 5'-phosphate.

The protein belongs to the class-III pyridoxal-phosphate-dependent aminotransferase family. ArgD subfamily. In terms of assembly, homodimer. Requires pyridoxal 5'-phosphate as cofactor.

It localises to the cytoplasm. It catalyses the reaction N(2)-acetyl-L-ornithine + 2-oxoglutarate = N-acetyl-L-glutamate 5-semialdehyde + L-glutamate. It participates in amino-acid biosynthesis; L-arginine biosynthesis; N(2)-acetyl-L-ornithine from L-glutamate: step 4/4. The sequence is that of Acetylornithine aminotransferase 2 from Caulobacter vibrioides (strain ATCC 19089 / CIP 103742 / CB 15) (Caulobacter crescentus).